The chain runs to 147 residues: UPF0306 protein KPK_0562 (147 aa).

This sequence belongs to the UPF0306 family.

This is UPF0306 protein KPK_0562 from Klebsiella pneumoniae (strain 342).